Consider the following 495-residue polypeptide: Protein painting of fourth (495 aa).

Positions 1–51 (MDSKRAALESGDGPDAKRLDTTDDQDKEASGGDGSQVMLAKHVAPYTGHGC) are disordered. The RRM domain occupies 215–289 (CSLYVGNIPF…RTLTVRYRRL (75 aa)). Over residues 332-342 (ISDSDNCSDSS) the composition is skewed to low complexity. Disordered stretches follow at residues 332 to 358 (ISDS…INEQ), 432 to 451 (PVPA…KKAK), and 461 to 495 (GPFR…DPDP). A compositionally biased stretch (basic and acidic residues) spans 345–358 (GKEDGKRKKKINEQ). A Bipartite nuclear localization signal motif is present at residues 351 to 367 (RKKKINEQEREIEKLKR). Positions 472-495 (TADEYEKDDRLEELYAQLERDPDP) are enriched in basic and acidic residues.

As to quaternary structure, interacts with Zeste. As to expression, weakly expressed in embryos. Expression increases during larval and pupal stages. In adults, it is predominantly expressed in males, while it is weakly expressed in females.

The protein resides in the nucleus. It localises to the chromosome. Its function is as follows. Probable RNA-binding protein that specifically binds to the fourth chromosome and may bind an RNA that spreads the fourth chromosome. May be a reminiscence of X chromosome dosage compensation of ancestral Drosophila species in which the X and the fourth chromosomes are one single chromosome. In Drosophila melanogaster (Fruit fly), this protein is Protein painting of fourth (Pof).